A 271-amino-acid polypeptide reads, in one-letter code: Ferric vulnibactin reductase VuuB (271 aa).

The FAD-binding FR-type domain maps to 8-131 (VYPMLLDFVR…IGPAGPDPLI (124 aa)).

It belongs to the SIP oxidoreductase family. Monomer. It depends on FAD as a cofactor.

It is found in the cytoplasm. The enzyme catalyses 2 a Fe(II)-siderophore + NAD(+) + H(+) = 2 a Fe(III)-siderophore + NADH. Its function is as follows. Ferric-siderophore reductase involved in iron removal from the siderophores after their transport into the cell. Acts as a major ferric-vulnibactin reductase catalyzing the reduction of Fe(3+)-vulnibactin, a catecholate siderophore synthesized by V.vulnificus. In Vibrio vulnificus (strain CMCP6), this protein is Ferric vulnibactin reductase VuuB.